Here is a 166-residue protein sequence, read N- to C-terminus: Transcriptional repressor NrdR (166 aa).

A zinc finger lies at 3–34; that stretch reads CPFCGHDDTQVKDSRSTEDGVAIRRRRVCSAC. One can recognise an ATP-cone domain in the interval 49-139; it reads LSVTKADGRR…VYRDFREVEA (91 aa). The disordered stretch occupies residues 146 to 166; the sequence is DMKPIPGETDTPSPDDSQETP.

This sequence belongs to the NrdR family. It depends on Zn(2+) as a cofactor.

Negatively regulates transcription of bacterial ribonucleotide reductase nrd genes and operons by binding to NrdR-boxes. The polypeptide is Transcriptional repressor NrdR (Gluconobacter oxydans (strain 621H) (Gluconobacter suboxydans)).